The chain runs to 476 residues: Serine/threonine-protein kinase Chk1 (476 aa).

The segment at 1-265 (MAVPFVEDWD…IPDIKKDRWY (265 aa)) is interaction with CLSPN. The Protein kinase domain maps to 9-265 (WDLVQTLGEG…IPDIKKDRWY (257 aa)). Residues 15 to 23 (LGEGAYGEV) and Lys-38 each bind ATP. The Proton acceptor role is filled by Asp-130. Lys-132 participates in a covalent cross-link: Glycyl lysine isopeptide (Lys-Gly) (interchain with G-Cter in ubiquitin). A disordered region spans residues 267–329 (KPLNRGAKRP…EPRTGLSLWD (63 aa)). Phosphoserine; by PKB/AKT1 is present on Ser-280. Over residues 280–291 (SGGMSESSSGFS) the composition is skewed to low complexity. Residues Ser-286, Ser-296, and Ser-301 each carry the phosphoserine modification. The span at 298 to 320 (LDFSPINSGSSEENVKFSSSQPE) shows a compositional bias: polar residues. Phosphoserine; by ATM and ATR is present on residues Ser-317 and Ser-345. The autoinhibitory region stretch occupies residues 391–476 (QCLKETFEKL…SSQKVWFPVT (86 aa)). Residue Lys-436 forms a Glycyl lysine isopeptide (Lys-Gly) (interchain with G-Cter in ubiquitin) linkage. 3 positions are modified to phosphoserine: Ser-463, Ser-467, and Ser-468.

This sequence belongs to the protein kinase superfamily. CAMK Ser/Thr protein kinase family. NIM1 subfamily. Interacts (phosphorylated by ATR) with RAD51. Interacts with and phosphorylates CLSPN, an adapter protein that regulates the ATR-dependent phosphorylation of CHEK1. Interacts with BRCA1. Interacts with and phosphorylates CDC25A, CDC25B and CDC25C. Interacts with FBXO6, which regulates CHEK1. Interacts with PPM1D, which regulates CHEK1 through dephosphorylation. Interacts with TIMELESS; DNA damage-dependent. Interacts with FEM1B; activates CHEK1 in response to stress. Interacts with TLK1. Interacts with XPO1 and YWHAZ. Interacts with CDK5RAP3; antagonizes CHEK1. Phosphorylated by ATR in a RAD17-dependent manner in response to ultraviolet irradiation and inhibition of DNA replication. Phosphorylated by ATM in response to ionizing irradiation. ATM and ATR can both phosphorylate Ser-317 and Ser-345 and this results in enhanced kinase activity. Phosphorylation at Ser-345 induces a change in the conformation of the protein, activates the kinase activity and is a prerequisite for interaction with FBXO6 and subsequent ubiquitination at Lys-436. Phosphorylation at Ser-345 also increases binding to 14-3-3 proteins and promotes nuclear retention. Conversely, dephosphorylation at Ser-345 by PPM1D may contribute to exit from checkpoint mediated cell cycle arrest. Phosphorylation at Ser-280 by AKT1/PKB, may promote mono and/or diubiquitination. Also phosphorylated at undefined residues during mitotic arrest, resulting in decreased activity. Post-translationally, ubiquitinated. Mono or diubiquitination promotes nuclear exclusion. The activated form (phosphorylated on Ser-345) is polyubiquitinated at Lys-436 by some SCF-type E3 ubiquitin ligase complex containing FBXO6 promoting its degradation. Ubiquitination and degradation are required to terminate the checkpoint and ensure that activated CHEK1 does not accumulate as cells progress through S phase, when replication forks encounter transient impediments during normal DNA replication. 'Lys-63'-mediated ubiquitination by TRAF4 at Lys-132 activates cell cycle arrest and activation of DNA repair. In terms of processing, proteolytically cleaved at the C-terminus by SPRTN during normal DNA replication, thereby promoting CHEK1 removal from chromatin and activating the protein kinase activity. As to expression, expressed in brain, heart, liver, lung, skeletal muscle, spleen and testis. In terms of tissue distribution, expressed only in liver.

It is found in the nucleus. The protein localises to the chromosome. Its subcellular location is the cytoplasm. The protein resides in the cytoskeleton. It localises to the microtubule organizing center. It is found in the centrosome. It carries out the reaction L-seryl-[protein] + ATP = O-phospho-L-seryl-[protein] + ADP + H(+). It catalyses the reaction L-threonyl-[protein] + ATP = O-phospho-L-threonyl-[protein] + ADP + H(+). Its activity is regulated as follows. Activated through phosphorylation predominantly by ATR but also by ATM in response to DNA damage or inhibition of DNA replication. Activation is modulated by several mediators including CLSPN, BRCA1 and FEM1B. Proteolytic cleavage at the C-terminus by SPRTN during normal DNA replication activates the protein kinase activity. Functionally, serine/threonine-protein kinase which is required for checkpoint-mediated cell cycle arrest and activation of DNA repair in response to the presence of DNA damage or unreplicated DNA. May also negatively regulate cell cycle progression during unperturbed cell cycles. This regulation is achieved by a number of mechanisms that together help to preserve the integrity of the genome. Recognizes the substrate consensus sequence [R-X-X-S/T]. Binds to and phosphorylates CDC25A, CDC25B and CDC25C. Phosphorylation of CDC25A at 'Ser-178' and 'Thr-507' and phosphorylation of CDC25C at 'Ser-216' creates binding sites for 14-3-3 proteins which inhibit CDC25A and CDC25C. Phosphorylation of CDC25A at 'Ser-76', 'Ser-124', 'Ser-178', 'Ser-279' and 'Ser-293' promotes proteolysis of CDC25A. Phosphorylation of CDC25A at 'Ser-76' primes the protein for subsequent phosphorylation at 'Ser-79', 'Ser-82' and 'Ser-88' by NEK11, which is required for polyubiquitination and degradation of CDCD25A. Inhibition of CDC25 leads to increased inhibitory tyrosine phosphorylation of CDK-cyclin complexes and blocks cell cycle progression. Also phosphorylates NEK6. Binds to and phosphorylates RAD51 at 'Thr-309', which promotes the release of RAD51 from BRCA2 and enhances the association of RAD51 with chromatin, thereby promoting DNA repair by homologous recombination. Phosphorylates multiple sites within the C-terminus of TP53, which promotes activation of TP53 by acetylation and promotes cell cycle arrest and suppression of cellular proliferation. Also promotes repair of DNA cross-links through phosphorylation of FANCE. Binds to and phosphorylates TLK1 at 'Ser-743', which prevents the TLK1-dependent phosphorylation of the chromatin assembly factor ASF1A. This may enhance chromatin assembly both in the presence or absence of DNA damage. May also play a role in replication fork maintenance through regulation of PCNA. May regulate the transcription of genes that regulate cell-cycle progression through the phosphorylation of histones. Phosphorylates histone H3.1 (to form H3T11ph), which leads to epigenetic inhibition of a subset of genes. May also phosphorylate RB1 to promote its interaction with the E2F family of transcription factors and subsequent cell cycle arrest. Phosphorylates SPRTN, promoting SPRTN recruitment to chromatin. Reduces replication stress and activates the G2/M checkpoint, by phosphorylating and inactivating PABIR1/FAM122A and promoting the serine/threonine-protein phosphatase 2A-mediated dephosphorylation and stabilization of WEE1 levels and activity. The sequence is that of Serine/threonine-protein kinase Chk1 (Chek1) from Rattus norvegicus (Rat).